A 214-amino-acid chain; its full sequence is Putative pit accessory protein (214 aa).

Belongs to the UPF0111 family.

Functionally, could be involved in orthophosphate transport. This Rhizobium meliloti (strain 1021) (Ensifer meliloti) protein is Putative pit accessory protein.